A 131-amino-acid polypeptide reads, in one-letter code: 23S rRNA-specific endonuclease VapC20 (131 aa).

Residues 2-125 enclose the PINc domain; that stretch reads IFVDTSFWAA…FDGDFSAAGF (124 aa). Residues Asp5 and Asp98 each contribute to the Mg(2+) site.

The protein belongs to the PINc/VapC protein family. Mg(2+) is required as a cofactor.

Functionally, toxic component of a type II toxin-antitoxin (TA) system. An endoribonuclease that cleaves 23S rRNA in the sarcin-ricin loop (SRL). The SRL sequence is highly conserved and is implicated in GTP hydrolysis by EF-Tu and EF-G. Acts on purified ribosomes but not on isolated RNA. Its toxic effect is neutralized by coexpression with cognate antitoxin VapB20. The sequence is that of 23S rRNA-specific endonuclease VapC20 (vapC20) from Mycobacterium tuberculosis (strain CDC 1551 / Oshkosh).